We begin with the raw amino-acid sequence, 337 residues long: MASSNFIDYVKVCCRSGKGGAGAVHFRKEKHTPLGGPDGGNGGRGGHIILRGNVQLWTLLHLKYTKHIMAEDGERGGTNRASGAQGKDQIVEVPLGTIARDPETGEKIAEITEDGQEIILIPAGRGGLGNEQFKTSTNQAPHYAQPGEPGIEAWVILELKVLADVGLVGFPNAGKSTLLSKVSAAKPEIADYAFTTLAPNLGVVKYRDYRSFIMADIPGIIEGAAEGKGLGIRFLRHIERNSILLFLIAADSKDIRAEYEILLNELQKYNPELLHKDRILAISKSDMLDDELKAELKKELPKGVETVFFSSYLNQGLTELKDLLWTTMNKPKSDFME.

Positions S4 to L162 constitute an Obg domain. The region spanning A163–N329 is the OBG-type G domain. GTP-binding positions include G169–S176, F194–A198, D216–G219, S283–D286, and S310–Y312. Mg(2+) is bound by residues S176 and T196.

The protein belongs to the TRAFAC class OBG-HflX-like GTPase superfamily. OBG GTPase family. As to quaternary structure, monomer. Mg(2+) is required as a cofactor.

The protein resides in the cytoplasm. An essential GTPase which binds GTP, GDP and possibly (p)ppGpp with moderate affinity, with high nucleotide exchange rates and a fairly low GTP hydrolysis rate. Plays a role in control of the cell cycle, stress response, ribosome biogenesis and in those bacteria that undergo differentiation, in morphogenesis control. This is GTPase Obg from Cytophaga hutchinsonii (strain ATCC 33406 / DSM 1761 / CIP 103989 / NBRC 15051 / NCIMB 9469 / D465).